We begin with the raw amino-acid sequence, 372 residues long: Protein RecA (372 aa).

Residue 77-84 participates in ATP binding; sequence GPESSGKT.

Belongs to the RecA family.

It is found in the cytoplasm. Functionally, can catalyze the hydrolysis of ATP in the presence of single-stranded DNA, the ATP-dependent uptake of single-stranded DNA by duplex DNA, and the ATP-dependent hybridization of homologous single-stranded DNAs. It interacts with LexA causing its activation and leading to its autocatalytic cleavage. This chain is Protein RecA, found in Corynebacterium diphtheriae (strain ATCC 700971 / NCTC 13129 / Biotype gravis).